The following is a 424-amino-acid chain: Tyrosine--tRNA ligase (424 aa).

Y37 is a binding site for L-tyrosine. The short motif at 42 to 51 (PTADSLHLGH) is the 'HIGH' region element. Residues Y175 and Q179 each contribute to the L-tyrosine site. Positions 235–239 (KFGKT) match the 'KMSKS' region motif. K238 provides a ligand contact to ATP. The S4 RNA-binding domain maps to 357–414 (ADLQQALVNAELVPSRGQARTMIGSNAVTINGEKQSNAEYNFSDADRLFGRYTLLRRG).

This sequence belongs to the class-I aminoacyl-tRNA synthetase family. TyrS type 1 subfamily. In terms of assembly, homodimer.

It is found in the cytoplasm. The catalysed reaction is tRNA(Tyr) + L-tyrosine + ATP = L-tyrosyl-tRNA(Tyr) + AMP + diphosphate + H(+). Catalyzes the attachment of tyrosine to tRNA(Tyr) in a two-step reaction: tyrosine is first activated by ATP to form Tyr-AMP and then transferred to the acceptor end of tRNA(Tyr). The protein is Tyrosine--tRNA ligase of Serratia proteamaculans (strain 568).